The primary structure comprises 479 residues: Trigger factor (479 aa).

Residues 174–261 form the PPIase FKBP-type domain; the sequence is GDIAVVSFSG…LKELKTRELP (88 aa). Residues 437-479 are disordered; the sequence is KVLESEAKTSKPAAKSKGSKTKSTKTKTNKAKTEKPASDKTKS. Residues 453–466 are compositionally biased toward basic residues; the sequence is KGSKTKSTKTKTNK. A compositionally biased stretch (basic and acidic residues) spans 467 to 479; that stretch reads AKTEKPASDKTKS.

The protein belongs to the FKBP-type PPIase family. Tig subfamily.

The protein localises to the cytoplasm. The catalysed reaction is [protein]-peptidylproline (omega=180) = [protein]-peptidylproline (omega=0). Functionally, involved in protein export. Acts as a chaperone by maintaining the newly synthesized protein in an open conformation. Functions as a peptidyl-prolyl cis-trans isomerase. The chain is Trigger factor from Prochlorococcus marinus (strain MIT 9303).